Consider the following 591-residue polypeptide: Probable sulfoacetaldehyde acetyltransferase (591 aa).

Residues 359-383 are disordered; that stretch reads MDHEDDDPGTEWNVGARQREPDRMS.

The protein belongs to the TPP enzyme family. It depends on Mg(2+) as a cofactor. The cofactor is thiamine diphosphate.

The protein resides in the cytoplasm. It catalyses the reaction acetyl phosphate + sulfite + H(+) = sulfoacetaldehyde + phosphate. Its pathway is organosulfur degradation; taurine degradation via aerobic pathway; acetyl phosphate and sulfite from taurine: step 2/2. The sequence is that of Probable sulfoacetaldehyde acetyltransferase (xsc) from Rhizobium meliloti (strain 1021) (Ensifer meliloti).